A 374-amino-acid polypeptide reads, in one-letter code: Anhydro-N-acetylmuramic acid kinase (374 aa).

Position 12–19 (Gly12–Asp19) interacts with ATP.

Belongs to the anhydro-N-acetylmuramic acid kinase family.

The catalysed reaction is 1,6-anhydro-N-acetyl-beta-muramate + ATP + H2O = N-acetyl-D-muramate 6-phosphate + ADP + H(+). The protein operates within amino-sugar metabolism; 1,6-anhydro-N-acetylmuramate degradation. It functions in the pathway cell wall biogenesis; peptidoglycan recycling. Its function is as follows. Catalyzes the specific phosphorylation of 1,6-anhydro-N-acetylmuramic acid (anhMurNAc) with the simultaneous cleavage of the 1,6-anhydro ring, generating MurNAc-6-P. Is required for the utilization of anhMurNAc either imported from the medium or derived from its own cell wall murein, and thus plays a role in cell wall recycling. The chain is Anhydro-N-acetylmuramic acid kinase from Salmonella arizonae (strain ATCC BAA-731 / CDC346-86 / RSK2980).